The following is a 56-amino-acid chain: Large ribosomal subunit protein bL33 (56 aa).

The protein belongs to the bacterial ribosomal protein bL33 family.

This is Large ribosomal subunit protein bL33 from Orientia tsutsugamushi (strain Ikeda) (Rickettsia tsutsugamushi).